We begin with the raw amino-acid sequence, 475 residues long: Fez family zinc finger protein 1 (475 aa).

The short motif at 28-43 (PLAFSIERIMARTPEP) is the Engrailed homology 1 repressor element. 6 consecutive C2H2-type zinc fingers follow at residues 260-282 (FTCE…MPVH), 288-310 (FVCK…KIIH), 316-338 (HKCN…TRIH), 344-366 (FVCE…KLTH), 372-394 (FKCN…MHTH), and 400-423 (FTCP…RKLH). Residues 428–475 (GLARTPAGEPGTEPPPPLPQQPPMTLPPLQPPLPTPGPLQPGLHQGHQ) are disordered. Residues 439–466 (TEPPPPLPQQPPMTLPPLQPPLPTPGPL) show a composition bias toward pro residues.

It belongs to the krueppel C2H2-type zinc-finger protein family. As to expression, expressed in brain. Little or no expression in other tissues. Overexpressed specifically in gastric cancers. A 2- to 20-fold increase is found in over 50% of gastric cancer tissues.

Its subcellular location is the nucleus. Its function is as follows. Transcription repressor. Involved in the axonal projection and proper termination of olfactory sensory neurons (OSN). Plays a role in rostro-caudal patterning of the diencephalon and in prethalamic formation. Expression is required in OSN to cell-autonomously regulate OSN axon projections. Regulates non-cell-autonomously the layer formation of the olfactory bulb development and the interneurons. May be required for correct rostral migration of the interneuron progenitors. This chain is Fez family zinc finger protein 1 (FEZF1), found in Homo sapiens (Human).